The following is a 232-amino-acid chain: Glycerol-3-phosphate acyltransferase 4 (232 aa).

The next 6 membrane-spanning stretches (helical) occupy residues 4 to 24, 54 to 76, 80 to 99, 107 to 127, 143 to 163, and 168 to 188; these read VFLI…AYLL, LGLA…AGWL, LWQQ…WPVF, GIAT…LIAL, VFLG…FFGV, and TVTW…LMAP.

The protein belongs to the PlsY family. As to quaternary structure, probably interacts with PlsX.

Its subcellular location is the cell membrane. The enzyme catalyses an acyl phosphate + sn-glycerol 3-phosphate = a 1-acyl-sn-glycero-3-phosphate + phosphate. The protein operates within lipid metabolism; phospholipid metabolism. Functionally, catalyzes the transfer of an acyl group from acyl-phosphate (acyl-PO(4)) to glycerol-3-phosphate (G3P) to form lysophosphatidic acid (LPA). This enzyme utilizes acyl-phosphate as fatty acyl donor, but not acyl-CoA or acyl-ACP. This Dehalococcoides mccartyi (strain CBDB1) protein is Glycerol-3-phosphate acyltransferase 4.